Here is a 1008-residue protein sequence, read N- to C-terminus: G protein-regulated inducer of neurite outgrowth 1 (1008 aa).

Residues 1–859 form a disordered region; sequence MDTAEDPAWL…SPPSRRDAGL (859 aa). A Phosphothreonine modification is found at threonine 60. Residues serine 64 and serine 75 each carry the phosphoserine modification. Polar residues predominate over residues 117-127; sequence ISGTPEATTSG. 4 stretches are compositionally biased toward basic and acidic residues: residues 137-159, 167-178, 230-269, and 279-291; these read TEPKSSDDRNPMFLEKMDFKSSK, GKEDPGSSRKAD, PRKEDPGSLRKVDPVSSDKVDPVFPRKEEPRYSGKEHPVS, and EKVDLVLSGKRDP. A Phosphoserine modification is found at serine 237. Polar residues-rich tracts occupy residues 326–336 and 391–406; these read SGKNGPVSSGT and HTDTTASAKTDLTSLK. Residues serine 436 and serine 452 each carry the phosphoserine modification. Positions 454 to 466 are enriched in basic and acidic residues; sequence GKEDPVSSRREDP. Positions 481–491 are enriched in polar residues; sequence PESSGKTNPVS. Residues 549-559 are compositionally biased toward basic and acidic residues; that stretch reads GKEDPVSKGKA. Position 615 is a phosphoserine (serine 615). The span at 643 to 656 shows a compositional bias: low complexity; sequence PGQEGAAAPGEAGA. A compositionally biased stretch (basic and acidic residues) spans 659–679; sequence LKKETPQASEKVDPGSCRKAE. At serine 737 the chain carries Phosphoserine. Residues 742–752 show a composition bias toward basic and acidic residues; that stretch reads RGSEGRVEPKA. Positions 755 to 764 are enriched in polar residues; that stretch reads VSSTEASSLG. Phosphoserine is present on serine 799. Residues 838-847 are compositionally biased toward low complexity; the sequence is SAFSFQAAPR. Threonine 877 is subject to Phosphothreonine. Residues serine 895 and serine 914 each carry the phosphoserine modification. Residues 899-1008 are interaction with GNAO1; that stretch reads AAVAPPEPAE…CCSRAGPTAE (110 aa). Positions 943–986 are disordered; the sequence is ERQIEEHGRQGAPAPPPAARAGPGRSGSVRTAPPDGAAKRPPGL. Residue serine 993 is modified to Phosphoserine. 2 S-palmitoyl cysteine lipidation sites follow: cysteine 999 and cysteine 1000.

As to quaternary structure, interacts with activated forms of GNAI1, GNAO1 and GNAZ. Post-translationally, palmitoylation on Cys-999 and/or Cys-1000 is required for membrane targeting. Widely expressed in the central nervous system, with highest levels in spinal cord.

It is found in the cell membrane. It localises to the cell projection. The protein resides in the growth cone. In terms of biological role, may be involved in neurite outgrowth. This chain is G protein-regulated inducer of neurite outgrowth 1 (GPRIN1), found in Homo sapiens (Human).